Reading from the N-terminus, the 263-residue chain is Pimeloyl-[acyl-carrier protein] methyl ester esterase (263 aa).

Residues Trp-23, 90–91 (SL), and 152–156 (FLTLQ) each bind substrate. The active-site Nucleophile is Ser-90. Residues Asp-216 and His-244 contribute to the active site. Residue His-244 coordinates substrate.

This sequence belongs to the AB hydrolase superfamily. Carboxylesterase BioH family. As to quaternary structure, monomer.

The protein resides in the cytoplasm. It carries out the reaction 6-carboxyhexanoyl-[ACP] methyl ester + H2O = 6-carboxyhexanoyl-[ACP] + methanol + H(+). It functions in the pathway cofactor biosynthesis; biotin biosynthesis. The physiological role of BioH is to remove the methyl group introduced by BioC when the pimeloyl moiety is complete. It allows to synthesize pimeloyl-ACP via the fatty acid synthetic pathway through the hydrolysis of the ester bonds of pimeloyl-ACP esters. This is Pimeloyl-[acyl-carrier protein] methyl ester esterase from Nitrosospira multiformis (strain ATCC 25196 / NCIMB 11849 / C 71).